The chain runs to 274 residues: Acetyl-coenzyme A carboxylase carboxyl transferase subunit alpha (274 aa).

Residues 2–250 enclose the CoA carboxyltransferase C-terminal domain; the sequence is NKEFIKSIVV…KKELMNAMNE (249 aa).

The protein belongs to the AccA family. In terms of assembly, acetyl-CoA carboxylase is a heterohexamer composed of biotin carboxyl carrier protein (AccB), biotin carboxylase (AccC) and two subunits each of ACCase subunit alpha (AccA) and ACCase subunit beta (AccD).

It localises to the cytoplasm. It catalyses the reaction N(6)-carboxybiotinyl-L-lysyl-[protein] + acetyl-CoA = N(6)-biotinyl-L-lysyl-[protein] + malonyl-CoA. It participates in lipid metabolism; malonyl-CoA biosynthesis; malonyl-CoA from acetyl-CoA: step 1/1. Functionally, component of the acetyl coenzyme A carboxylase (ACC) complex. First, biotin carboxylase catalyzes the carboxylation of biotin on its carrier protein (BCCP) and then the CO(2) group is transferred by the carboxyltransferase to acetyl-CoA to form malonyl-CoA. The polypeptide is Acetyl-coenzyme A carboxylase carboxyl transferase subunit alpha (Clostridium botulinum (strain Eklund 17B / Type B)).